Reading from the N-terminus, the 399-residue chain is Succinate--CoA ligase [ADP-forming] subunit beta (399 aa).

Residues 9–254 (KAVLQPFGVS…TTEEDAKEIE (246 aa)) form the ATP-grasp domain. Residues lysine 46, 53 to 55 (GRG), glutamate 109, serine 112, and glutamate 117 contribute to the ATP site. Mg(2+)-binding residues include asparagine 209 and aspartate 223. Residues asparagine 274 and 331-333 (GIM) each bind substrate.

It belongs to the succinate/malate CoA ligase beta subunit family. As to quaternary structure, heterotetramer of two alpha and two beta subunits. The cofactor is Mg(2+).

The catalysed reaction is succinate + ATP + CoA = succinyl-CoA + ADP + phosphate. It catalyses the reaction GTP + succinate + CoA = succinyl-CoA + GDP + phosphate. It participates in carbohydrate metabolism; tricarboxylic acid cycle; succinate from succinyl-CoA (ligase route): step 1/1. Succinyl-CoA synthetase functions in the citric acid cycle (TCA), coupling the hydrolysis of succinyl-CoA to the synthesis of either ATP or GTP and thus represents the only step of substrate-level phosphorylation in the TCA. The beta subunit provides nucleotide specificity of the enzyme and binds the substrate succinate, while the binding sites for coenzyme A and phosphate are found in the alpha subunit. The sequence is that of Succinate--CoA ligase [ADP-forming] subunit beta from Rhodopseudomonas palustris (strain BisA53).